Here is a 146-residue protein sequence, read N- to C-terminus: Hemoglobin subunit beta (146 aa).

N-acetylalanine is present on Ala1. Residues 2-146 (SFDPHEKQLI…VAAALAAEYH (145 aa)) enclose the Globin domain. Heme b contacts are provided by His63 and His92.

Belongs to the globin family. As to quaternary structure, heterotetramer of two alpha chains and two beta chains. Red blood cells.

Functionally, involved in oxygen transport from the lung to the various peripheral tissues. The protein is Hemoglobin subunit beta (HBB) of Crocodylus niloticus (Nile crocodile).